The sequence spans 265 residues: Small ribosomal subunit protein eS1 (265 aa).

The segment at 234–256 (EGSTTTSKGVTSEGGEKVDRVDG) is disordered. The segment covering 247 to 256 (GGEKVDRVDG) has biased composition (basic and acidic residues).

This sequence belongs to the eukaryotic ribosomal protein eS1 family. As to quaternary structure, component of the small ribosomal subunit. Mature ribosomes consist of a small (40S) and a large (60S) subunit. The 40S subunit contains about 33 different proteins and 1 molecule of RNA (18S). The 60S subunit contains about 49 different proteins and 3 molecules of RNA (28S, 5.8S and 5S).

Its subcellular location is the cytoplasm. The protein is Small ribosomal subunit protein eS1 of Aplysia californica (California sea hare).